We begin with the raw amino-acid sequence, 252 residues long: Triosephosphate isomerase (252 aa).

10 to 12 (NWK) provides a ligand contact to substrate. Histidine 96 acts as the Electrophile in catalysis. Residue glutamate 168 is the Proton acceptor of the active site. Substrate is bound by residues glycine 174, serine 214, and 235–236 (GG).

This sequence belongs to the triosephosphate isomerase family. As to quaternary structure, homodimer.

It is found in the cytoplasm. The enzyme catalyses D-glyceraldehyde 3-phosphate = dihydroxyacetone phosphate. It functions in the pathway carbohydrate biosynthesis; gluconeogenesis. Its pathway is carbohydrate degradation; glycolysis; D-glyceraldehyde 3-phosphate from glycerone phosphate: step 1/1. Functionally, involved in the gluconeogenesis. Catalyzes stereospecifically the conversion of dihydroxyacetone phosphate (DHAP) to D-glyceraldehyde-3-phosphate (G3P). This chain is Triosephosphate isomerase, found in Lactococcus lactis subsp. cremoris (strain MG1363).